A 94-amino-acid polypeptide reads, in one-letter code: Putative regulatory protein LEPBI_I0950 (94 aa).

Belongs to the RemA family.

This chain is Putative regulatory protein LEPBI_I0950, found in Leptospira biflexa serovar Patoc (strain Patoc 1 / ATCC 23582 / Paris).